Here is a 210-residue protein sequence, read N- to C-terminus: Imidazole glycerol phosphate synthase subunit HisH (210 aa).

Residues 7–210 (KVVIIDTGCA…SQLIKNFLEM (204 aa)) enclose the Glutamine amidotransferase type-1 domain. The active-site Nucleophile is C82. Residues H192 and E194 contribute to the active site.

Heterodimer of HisH and HisF.

It is found in the cytoplasm. It carries out the reaction 5-[(5-phospho-1-deoxy-D-ribulos-1-ylimino)methylamino]-1-(5-phospho-beta-D-ribosyl)imidazole-4-carboxamide + L-glutamine = D-erythro-1-(imidazol-4-yl)glycerol 3-phosphate + 5-amino-1-(5-phospho-beta-D-ribosyl)imidazole-4-carboxamide + L-glutamate + H(+). The enzyme catalyses L-glutamine + H2O = L-glutamate + NH4(+). Its pathway is amino-acid biosynthesis; L-histidine biosynthesis; L-histidine from 5-phospho-alpha-D-ribose 1-diphosphate: step 5/9. Functionally, IGPS catalyzes the conversion of PRFAR and glutamine to IGP, AICAR and glutamate. The HisH subunit catalyzes the hydrolysis of glutamine to glutamate and ammonia as part of the synthesis of IGP and AICAR. The resulting ammonia molecule is channeled to the active site of HisF. The chain is Imidazole glycerol phosphate synthase subunit HisH from Photobacterium profundum (strain SS9).